The following is a 102-amino-acid chain: Class II hydrophobin 3 (102 aa).

Positions 1 to 16 (MQFLAVAALLFTTALA) are cleaved as a signal peptide. 4 cysteine pairs are disulfide-bonded: cysteine 33-cysteine 83, cysteine 44-cysteine 74, cysteine 45-cysteine 57, and cysteine 84-cysteine 95.

It belongs to the cerato-ulmin hydrophobin family. Homotetramer. Further self-assembles to form highly ordered films at water-air interfaces through intermolecular interactions. As to expression, expressed in the conidia, vegetative growth and induction growth stages.

Its subcellular location is the secreted. The protein localises to the cell wall. It localises to the cytoplasm. In terms of biological role, aerial growth, conidiation, and dispersal of filamentous fungi in the environment rely upon a capability of their secreting small amphipathic proteins called hydrophobins (HPBs) with low sequence identity. Class I can self-assemble into an outermost layer of rodlet bundles on aerial cell surfaces, conferring cellular hydrophobicity that supports fungal growth, development and dispersal; whereas Class II form highly ordered films at water-air interfaces through intermolecular interactions but contribute nothing to the rodlet structure. Hbf3 is a class II hydrophobin that has a role in vegetative growth and asexual development. In Hypocrea jecorina (strain QM6a) (Trichoderma reesei), this protein is Class II hydrophobin 3.